A 154-amino-acid polypeptide reads, in one-letter code: Small ribosomal subunit protein uS7 (154 aa).

The protein belongs to the universal ribosomal protein uS7 family. As to quaternary structure, part of the 30S ribosomal subunit. Contacts proteins S9 and S11.

One of the primary rRNA binding proteins, it binds directly to 16S rRNA where it nucleates assembly of the head domain of the 30S subunit. Is located at the subunit interface close to the decoding center, probably blocks exit of the E-site tRNA. This is Small ribosomal subunit protein uS7 from Karelsulcia muelleri (strain GWSS) (Sulcia muelleri).